The chain runs to 221 residues: Germin-like protein 8-2 (221 aa).

Positions 1–24 (MASSSFSFLLVAALLGLASWKAIA) are cleaved as a signal peptide. An intrachain disulfide couples C34 to C49. N-linked (GlcNAc...) asparagine glycans are attached at residues N54 and N79. Residues 64–215 (AMLDKPRDTN…AFQVDKKIID (152 aa)) enclose the Cupin type-1 domain. The Mn(2+) site is built by H112, H114, E119, and H160.

The protein belongs to the germin family. In terms of assembly, oligomer (believed to be a pentamer but probably hexamer).

It is found in the secreted. It localises to the extracellular space. The protein resides in the apoplast. In terms of biological role, plays a role in broad-spectrum disease resistance. Probably has no oxalate oxidase activity even if the active site is conserved. This is Germin-like protein 8-2 (GER3) from Oryza sativa subsp. japonica (Rice).